The following is a 31-amino-acid chain: Toxin BmKK12 (31 aa).

At Gln-1 the chain carries Pyrrolidone carboxylic acid. 3 cysteine pairs are disulfide-bonded: Cys-4–Cys-20, Cys-10–Cys-25, and Cys-14–Cys-27. The residue at position 31 (Pro-31) is a Proline amide.

It belongs to the short scorpion toxin superfamily. Potassium channel inhibitor family. Alpha-KTx 17 subfamily. In terms of processing, the N-terminus is blocked. Expressed by the venom gland.

Its subcellular location is the secreted. Blocker of potassium channels (Kv). The sequence is that of Toxin BmKK12 from Olivierus martensii (Manchurian scorpion).